Reading from the N-terminus, the 35-residue chain is Photosystem II reaction center protein T (35 aa).

The helical transmembrane segment at 3–23 threads the bilayer; sequence ALVYTFLLVSTLGIIFFAIFF.

The protein belongs to the PsbT family. PSII is composed of 1 copy each of membrane proteins PsbA, PsbB, PsbC, PsbD, PsbE, PsbF, PsbH, PsbI, PsbJ, PsbK, PsbL, PsbM, PsbT, PsbY, PsbZ, Psb30/Ycf12, at least 3 peripheral proteins of the oxygen-evolving complex and a large number of cofactors. It forms dimeric complexes.

It localises to the plastid. Its subcellular location is the chloroplast thylakoid membrane. Its function is as follows. Found at the monomer-monomer interface of the photosystem II (PS II) dimer, plays a role in assembly and dimerization of PSII. PSII is a light-driven water plastoquinone oxidoreductase, using light energy to abstract electrons from H(2)O, generating a proton gradient subsequently used for ATP formation. This is Photosystem II reaction center protein T from Saururus cernuus (Lizard's tail).